The following is a 293-amino-acid chain: MAAITASMVAELRAKTDAPMMECKKALTEADGDMAKAEELLRVKLGNKASKAASRVTAEGVVASFVGANAGALVELNCETDFVAKNDDFNAFAKTVAELVATQNPADVAALSALPLDGKTVDEVRLALVGKIGENISIRRFVRFETSNKLATYLHGSRIGVIVEYTGAQEQVGKDVAMHVAAMKPVSLSADEVPADLIEKERRVAEQKAAESGKPAEIVAKMVDGSVQKFLKEVSLLNQPFVKNDKQTIEQMLKAADAAVQKFALFVVGEGIEKRQDDFAAEVAAQVAAAKQQ.

The involved in Mg(2+) ion dislocation from EF-Tu stretch occupies residues 80 to 83 (TDFV).

It belongs to the EF-Ts family.

Its subcellular location is the cytoplasm. Functionally, associates with the EF-Tu.GDP complex and induces the exchange of GDP to GTP. It remains bound to the aminoacyl-tRNA.EF-Tu.GTP complex up to the GTP hydrolysis stage on the ribosome. This Burkholderia pseudomallei (strain 1106a) protein is Elongation factor Ts.